The primary structure comprises 104 residues: Proteasome subunit beta type-8 (104 aa).

Belongs to the peptidase T1B family. As to quaternary structure, the 26S proteasome consists of a 20S proteasome core and two 19S regulatory subunits. The 20S proteasome core is composed of 28 subunits that are arranged in four stacked rings, resulting in a barrel-shaped structure. The two end rings are each formed by seven alpha subunits, and the two central rings are each formed by seven beta subunits. The catalytic chamber with the active sites is on the inside of the barrel. Component of the immunoproteasome, where it displaces the equivalent housekeeping subunit PSMB5. Component of the spermatoproteasome, a form of the proteasome specifically found in testis. Directly interacts with POMP.

The protein resides in the cytoplasm. It is found in the nucleus. The catalysed reaction is Cleavage of peptide bonds with very broad specificity.. In terms of biological role, the proteasome is a multicatalytic proteinase complex which is characterized by its ability to cleave peptides with Arg, Phe, Tyr, Leu, and Glu adjacent to the leaving group at neutral or slightly basic pH. The proteasome has an ATP-dependent proteolytic activity. This subunit is involved in antigen processing to generate class I binding peptides. May participate in the generation of spliced peptides resulting from the ligation of two separate proteasomal cleavage products that are not contiguous in the parental protein. Required for adipocyte differentiation. This chain is Proteasome subunit beta type-8 (PSMB8), found in Sus scrofa (Pig).